A 548-amino-acid polypeptide reads, in one-letter code: 5-aminolevulinate synthase, mitochondrial (548 aa).

The transit peptide at 1-22 (MQRSIFARFGNSSAAVSTLNRL) directs the protein to the mitochondrion. Positions 91, 204, and 223 each coordinate substrate. Pyridoxal 5'-phosphate contacts are provided by Ser-256, His-284, and Thr-334. Residue Lys-337 is part of the active site. Position 337 is an N6-(pyridoxal phosphate)lysine (Lys-337). Residues Thr-366 and Thr-367 each contribute to the pyridoxal 5'-phosphate site. Position 452 (Thr-452) interacts with substrate.

The protein belongs to the class-II pyridoxal-phosphate-dependent aminotransferase family. As to quaternary structure, homodimer. Interacts with MCX1. Requires pyridoxal 5'-phosphate as cofactor.

The protein localises to the mitochondrion matrix. It catalyses the reaction succinyl-CoA + glycine + H(+) = 5-aminolevulinate + CO2 + CoA. Its pathway is porphyrin-containing compound metabolism; protoporphyrin-IX biosynthesis; 5-aminolevulinate from glycine: step 1/1. With respect to regulation, ihnhibited by hemin. Catalyzes the synthesis of 5-aminolevulinate (ALA) from succinyl-CoA and glycine, the first and rate-limiting step in heme biosynthesis. The polypeptide is 5-aminolevulinate synthase, mitochondrial (Saccharomyces cerevisiae (strain ATCC 204508 / S288c) (Baker's yeast)).